A 281-amino-acid chain; its full sequence is Very long chain fatty acid elongase 7 (281 aa).

At alanine 2 the chain carries N-acetylalanine. The Lumenal portion of the chain corresponds to 2 to 27 (AFSDLTSRTVRLYDNWIKDADPRVED). Residues 28 to 48 (WLLMSSPLPQTIILGFYVYFV) form a helical membrane-spanning segment. Over 49–66 (TSLGPKLMENRKPFELKK) the chain is Cytoplasmic. The chain crosses the membrane as a helical span at residues 67-87 (VMITYNFSIVLFSVYMFYEFI). The Lumenal portion of the chain corresponds to 88-115 (MSGWGTGYSFRCDIVDYSQSPTALRMVR). Cysteines 99 and 231 form a disulfide. Residues 116 to 136 (TCWLYYFSKFIELLDTIFFIL) form a helical membrane-spanning segment. Positions 124, 137, 139, 142, and 147 each coordinate 3-oxoeicosanoyl-CoA. The Cytoplasmic segment spans residues 137–142 (RKKNSQ). The helical transmembrane segment at 143–162 (VTFLHVFHHTIMPWTWWFGV) threads the bilayer. Positions 147-151 (HVFHH) match the HxxHH motif motif. The active-site Nucleophile is the histidine 150. Residues 163–171 (KFAAGGLGT) lie on the Lumenal side of the membrane. Residues 172–194 (FHAFLNTAVHVVMYSYYGLCALG) traverse the membrane as a helical segment. Residues tyrosine 187, lysine 204, threonine 208, and glutamine 211 each contribute to the 3-oxoeicosanoyl-CoA site. Over 195 to 206 (PDYQKYLWWKKY) the chain is Cytoplasmic. Residues 207–227 (LTSLQLIQFVLITIHISQFFF) traverse the membrane as a helical segment. Topologically, residues 228–236 (MEDCKYQFP) are lumenal. The chain crosses the membrane as a helical span at residues 237–257 (VFQYIIMSYGCIFLLLFLHFW). Residues 258-281 (YRAYTKGQRLPKTVKHGICKNKDH) lie on the Cytoplasmic side of the membrane. Position 266 (arginine 266) interacts with 3-oxoeicosanoyl-CoA. Positions 277-281 (KNKDH) match the Di-lysine motif motif.

The protein belongs to the ELO family. ELOVL7 subfamily. As to quaternary structure, homodimer. Interacts with TECR.

The protein localises to the endoplasmic reticulum membrane. The catalysed reaction is a very-long-chain acyl-CoA + malonyl-CoA + H(+) = a very-long-chain 3-oxoacyl-CoA + CO2 + CoA. It catalyses the reaction eicosanoyl-CoA + malonyl-CoA + H(+) = 3-oxodocosanoyl-CoA + CO2 + CoA. The enzyme catalyses (5Z,8Z,11Z,14Z)-eicosatetraenoyl-CoA + malonyl-CoA + H(+) = (7Z,10Z,13Z,16Z)-3-oxodocosatetraenoyl-CoA + CO2 + CoA. It carries out the reaction (6Z,9Z,12Z)-octadecatrienoyl-CoA + malonyl-CoA + H(+) = (8Z,11Z,14Z)-3-oxoeicosatrienoyl-CoA + CO2 + CoA. The catalysed reaction is (9Z,12Z)-octadecadienoyl-CoA + malonyl-CoA + H(+) = (11Z,14Z)-3-oxoicosa-11,14-dienoyl-CoA + CO2 + CoA. It catalyses the reaction (9Z)-octadecenoyl-CoA + malonyl-CoA + H(+) = 3-oxo-(11Z)-eicosenoyl-CoA + CO2 + CoA. The enzyme catalyses octadecanoyl-CoA + malonyl-CoA + H(+) = 3-oxoeicosanoyl-CoA + CO2 + CoA. It carries out the reaction hexadecanoyl-CoA + malonyl-CoA + H(+) = 3-oxooctadecanoyl-CoA + CO2 + CoA. The catalysed reaction is (9Z,12Z,15Z)-octadecatrienoyl-CoA + malonyl-CoA + H(+) = (11Z,14Z,17Z)-3-oxoeicosatrienoyl-CoA + CO2 + CoA. Its pathway is lipid metabolism; fatty acid biosynthesis. Its function is as follows. Catalyzes the first and rate-limiting reaction of the four reactions that constitute the long-chain fatty acids elongation cycle. This endoplasmic reticulum-bound enzymatic process allows the addition of 2 carbons to the chain of long- and very long-chain fatty acids (VLCFAs) per cycle. Condensing enzyme with higher activity toward C18 acyl-CoAs, especially C18:3(n-3) acyl-CoAs and C18:3(n-6)-CoAs. Also active toward C20:4-, C18:0-, C18:1-, C18:2- and C16:0-CoAs, and weakly toward C20:0-CoA. Little or no activity toward C22:0-, C24:0-, or C26:0-CoAs. May participate in the production of saturated and polyunsaturated VLCFAs of different chain lengths that are involved in multiple biological processes as precursors of membrane lipids and lipid mediators. This is Very long chain fatty acid elongase 7 from Bos taurus (Bovine).